We begin with the raw amino-acid sequence, 603 residues long: MAKHIVELTDALSNKIAAGEVVERPASVVKELVENAIDAGSTVIDILVEEAGLNKITIIDNGSGIEEEDVATAFLRHATSKIKNEADLFRVHTLGFRGEALPSIASVSHLEMETSTGEAKGTTISLEGGKIIEQKSGHARKGTQIEVSQLFFNTPARLKYLKSLPTELGNITDILNRLALAHPDISFRFSHNGKPLLQTNGNGDLRQVIAAIYGVSIAKKSVPVKAESLDFKISGYAVLPEVNRSNRNYISTIINGRFIKNFALVKAIQEGYHTLLPIGRFPIIVLQIEMDPIIVDVNVHPAKLEVRLSKEKELGQLISQMIKETFHKLQLIPDGEISKKQKEDQKSEQIQISFEEKKPVKETPTLFSKPTIPEYVPSDEDAPREDDFILETMPSYEPESQAEQEEHTKERIPKMYPIGQMHATYIFAQNENGLYIIDQHAAQERIKYEFYREKIGEVSRELQELLVPIVLEFPADEYVRLEEQKAKLEEVGVFLENFGQNSFIIRAHPTWFPKDQEEEMLREIIDEALSAPSISIHKLREDTAIMMSCKKSIKANHYLTTQDMEALLDTLREASDPFTCPHGRPVIIQYSTYELEKMFKRVM.

The segment at 361–383 (KETPTLFSKPTIPEYVPSDEDAP) is disordered.

Belongs to the DNA mismatch repair MutL/HexB family.

This protein is involved in the repair of mismatches in DNA. It is required for dam-dependent methyl-directed DNA mismatch repair. May act as a 'molecular matchmaker', a protein that promotes the formation of a stable complex between two or more DNA-binding proteins in an ATP-dependent manner without itself being part of a final effector complex. This is DNA mismatch repair protein MutL from Listeria monocytogenes serotype 4b (strain CLIP80459).